Consider the following 186-residue polypeptide: Ran guanine nucleotide release factor (186 aa).

The tract at residues 27 to 70 is interaction with RAN; it reads DLRPVPDNQEVFCHPVTDQSLIVELLELQAHVRGEAAARYHFED.

Belongs to the MOG1 family. Monomer. Interacts with RAN, both RAN-GTP and RAN-GDP. Competes with RCC1 for a common binding site on RAN and thereby inhibits RCC1-mediated nucleotide exchange. Forms a complex with RAN-GTP and RANBP1. Interacts with the cytoplasmic loop 2 of SCN5A. As to expression, isoform 1 and isoform 2 are ubiquitously expressed. Detected in heart and brain.

The protein resides in the nucleus. It is found in the cytoplasm. It localises to the perinuclear region. Its subcellular location is the cell membrane. Its function is as follows. May regulate the intracellular trafficking of RAN. Promotes guanine nucleotide release from RAN and inhibits binding of new GTP by preventing the binding of the RAN guanine nucleotide exchange factor RCC1. Regulates the levels of GTP-bound RAN in the nucleus, and thereby plays a role in the regulation of RAN-dependent mitotic spindle dynamics. Enhances the expression of SCN5A at the cell membrane in cardiomyocytes. This is Ran guanine nucleotide release factor (RANGRF) from Homo sapiens (Human).